We begin with the raw amino-acid sequence, 114 residues long: Replication initiation control protein YabA (114 aa).

Zn(2+) is bound by residues His79, Cys81, Cys95, and Cys98.

It belongs to the YabA family. As to quaternary structure, homotetramer. Interacts with both DnaA and DnaN, acting as a bridge between these two proteins. The cofactor is Zn(2+).

The protein localises to the cytoplasm. It is found in the nucleoid. In terms of biological role, involved in control of chromosome replication initiation. Inhibits the cooperative binding of DnaA to the oriC region, thus negatively regulating initiation of chromosome replication. Inhibits the ability of DnaA-ATP to form a helix on DNA; does not disassemble preformed DnaA-DNA helices. Decreases the residence time of DnaA on the chromosome at its binding sites (oriC, replication forks and promoter-binding sites). Tethers DnaA to the replication machinery via the DNA polymerase beta sliding clamp subunit (dnaN). Associates with oriC and other DnaA targets on the chromosome in a DnaA-dependent manner. The sequence is that of Replication initiation control protein YabA from Lactobacillus johnsonii (strain CNCM I-12250 / La1 / NCC 533).